We begin with the raw amino-acid sequence, 481 residues long: Inosine-5'-monophosphate dehydrogenase (481 aa).

CBS domains are found at residues 92–148 (VIND…SKKV) and 152–209 (MTKM…PEAN). NAD(+) contacts are provided by residues Asp-244 and 293–295 (GIG). Gly-295 and Gly-297 together coordinate K(+). Ser-298 is an IMP binding site. Cys-300 provides a ligand contact to K(+). Residue Cys-300 is the Thioimidate intermediate of the active site. Residues 333–335 (DGG), 356–357 (GS), and 380–384 (YRGMG) contribute to the IMP site. Arg-396 (proton acceptor) is an active-site residue. Residue Glu-410 coordinates IMP. Residues Glu-464, Ser-465, and His-466 each coordinate K(+).

This sequence belongs to the IMPDH/GMPR family. Homotetramer. K(+) serves as cofactor.

The enzyme catalyses IMP + NAD(+) + H2O = XMP + NADH + H(+). It functions in the pathway purine metabolism; XMP biosynthesis via de novo pathway; XMP from IMP: step 1/1. With respect to regulation, mycophenolic acid (MPA) is a non-competitive inhibitor that prevents formation of the closed enzyme conformation by binding to the same site as the amobile flap. In contrast, mizoribine monophosphate (MZP) is a competitive inhibitor that induces the closed conformation. MPA is a potent inhibitor of mammalian IMPDHs but a poor inhibitor of the bacterial enzymes. MZP is a more potent inhibitor of bacterial IMPDH. Functionally, catalyzes the conversion of inosine 5'-phosphate (IMP) to xanthosine 5'-phosphate (XMP), the first committed and rate-limiting step in the de novo synthesis of guanine nucleotides, and therefore plays an important role in the regulation of cell growth. The chain is Inosine-5'-monophosphate dehydrogenase from Helicobacter pylori (strain J99 / ATCC 700824) (Campylobacter pylori J99).